Here is a 212-residue protein sequence, read N- to C-terminus: Pyridoxine/pyridoxamine 5'-phosphate oxidase (212 aa).

Substrate contacts are provided by residues Arg8–Tyr11 and Lys66. FMN-binding positions include Arg61–Lys66, Phe76–Thr77, Arg82, Lys83, and Gln105. Residues Tyr123, Arg127, and Ser131 each coordinate substrate. FMN is bound by residues Gln140–Ser141 and Trp185. Arg191 to His193 provides a ligand contact to substrate. Arg195 contacts FMN.

This sequence belongs to the pyridoxamine 5'-phosphate oxidase family. Homodimer. It depends on FMN as a cofactor.

It carries out the reaction pyridoxamine 5'-phosphate + O2 + H2O = pyridoxal 5'-phosphate + H2O2 + NH4(+). The catalysed reaction is pyridoxine 5'-phosphate + O2 = pyridoxal 5'-phosphate + H2O2. It participates in cofactor metabolism; pyridoxal 5'-phosphate salvage; pyridoxal 5'-phosphate from pyridoxamine 5'-phosphate: step 1/1. Its pathway is cofactor metabolism; pyridoxal 5'-phosphate salvage; pyridoxal 5'-phosphate from pyridoxine 5'-phosphate: step 1/1. Functionally, catalyzes the oxidation of either pyridoxine 5'-phosphate (PNP) or pyridoxamine 5'-phosphate (PMP) into pyridoxal 5'-phosphate (PLP). This Shewanella denitrificans (strain OS217 / ATCC BAA-1090 / DSM 15013) protein is Pyridoxine/pyridoxamine 5'-phosphate oxidase.